We begin with the raw amino-acid sequence, 90 residues long: UPF0297 protein lwe1516 (90 aa).

The protein belongs to the UPF0297 family.

The protein is UPF0297 protein lwe1516 of Listeria welshimeri serovar 6b (strain ATCC 35897 / DSM 20650 / CCUG 15529 / CIP 8149 / NCTC 11857 / SLCC 5334 / V8).